Here is a 513-residue protein sequence, read N- to C-terminus: ATP synthase subunit alpha 1 (513 aa).

Residue 169–176 (GDRQTGKT) coordinates ATP.

It belongs to the ATPase alpha/beta chains family. F-type ATPases have 2 components, CF(1) - the catalytic core - and CF(0) - the membrane proton channel. CF(1) has five subunits: alpha(3), beta(3), gamma(1), delta(1), epsilon(1). CF(0) has three main subunits: a(1), b(2) and c(9-12). The alpha and beta chains form an alternating ring which encloses part of the gamma chain. CF(1) is attached to CF(0) by a central stalk formed by the gamma and epsilon chains, while a peripheral stalk is formed by the delta and b chains.

The protein localises to the cell inner membrane. It catalyses the reaction ATP + H2O + 4 H(+)(in) = ADP + phosphate + 5 H(+)(out). Produces ATP from ADP in the presence of a proton gradient across the membrane. The alpha chain is a regulatory subunit. The protein is ATP synthase subunit alpha 1 of Nitrosomonas eutropha (strain DSM 101675 / C91 / Nm57).